The chain runs to 348 residues: Flagellar P-ring protein (348 aa).

An N-terminal signal peptide occupies residues 1–24 (MRRKNNNKIWIWVATLILSISALY).

It belongs to the FlgI family. In terms of assembly, the basal body constitutes a major portion of the flagellar organelle and consists of four rings (L,P,S, and M) mounted on a central rod.

It localises to the periplasm. The protein resides in the bacterial flagellum basal body. Its function is as follows. Assembles around the rod to form the L-ring and probably protects the motor/basal body from shearing forces during rotation. In Helicobacter hepaticus (strain ATCC 51449 / 3B1), this protein is Flagellar P-ring protein.